Reading from the N-terminus, the 186-residue chain is Ribosome-recycling factor (186 aa).

Belongs to the RRF family.

It is found in the cytoplasm. Its function is as follows. Responsible for the release of ribosomes from messenger RNA at the termination of protein biosynthesis. May increase the efficiency of translation by recycling ribosomes from one round of translation to another. The sequence is that of Ribosome-recycling factor from Rickettsia felis (strain ATCC VR-1525 / URRWXCal2) (Rickettsia azadi).